Reading from the N-terminus, the 399-residue chain is Nicotinate phosphoribosyltransferase (399 aa).

His217 bears the Phosphohistidine; by autocatalysis mark.

It belongs to the NAPRTase family. In terms of processing, transiently phosphorylated on a His residue during the reaction cycle. Phosphorylation strongly increases the affinity for substrates and increases the rate of nicotinate D-ribonucleotide production. Dephosphorylation regenerates the low-affinity form of the enzyme, leading to product release.

The catalysed reaction is nicotinate + 5-phospho-alpha-D-ribose 1-diphosphate + ATP + H2O = nicotinate beta-D-ribonucleotide + ADP + phosphate + diphosphate. Its pathway is cofactor biosynthesis; NAD(+) biosynthesis; nicotinate D-ribonucleotide from nicotinate: step 1/1. Catalyzes the synthesis of beta-nicotinate D-ribonucleotide from nicotinate and 5-phospho-D-ribose 1-phosphate at the expense of ATP. The protein is Nicotinate phosphoribosyltransferase of Burkholderia ambifaria (strain MC40-6).